A 377-amino-acid polypeptide reads, in one-letter code: Glutamate 5-kinase (377 aa).

Lys-22 contacts ATP. Ser-62, Asp-149, and Asn-161 together coordinate substrate. Residues 181 to 182 (TD) and 223 to 229 (TGGMVTK) contribute to the ATP site. Residues 285 to 363 (RGVLVADSGA…AQLRRLLGEE (79 aa)) enclose the PUA domain.

This sequence belongs to the glutamate 5-kinase family.

It localises to the cytoplasm. The catalysed reaction is L-glutamate + ATP = L-glutamyl 5-phosphate + ADP. It participates in amino-acid biosynthesis; L-proline biosynthesis; L-glutamate 5-semialdehyde from L-glutamate: step 1/2. Functionally, catalyzes the transfer of a phosphate group to glutamate to form L-glutamate 5-phosphate. This is Glutamate 5-kinase from Bifidobacterium animalis subsp. lactis (strain AD011).